The following is a 175-amino-acid chain: Phosphopantetheine adenylyltransferase (175 aa).

S10 contacts substrate. ATP-binding positions include 10–11 (SF) and H18. Residues K42, L74, and R88 each coordinate substrate. ATP contacts are provided by residues 89–91 (GMR), E99, and 124–130 (WIFTSSS).

It belongs to the bacterial CoaD family. In terms of assembly, homohexamer. It depends on Mg(2+) as a cofactor.

The protein resides in the cytoplasm. It catalyses the reaction (R)-4'-phosphopantetheine + ATP + H(+) = 3'-dephospho-CoA + diphosphate. It functions in the pathway cofactor biosynthesis; coenzyme A biosynthesis; CoA from (R)-pantothenate: step 4/5. Reversibly transfers an adenylyl group from ATP to 4'-phosphopantetheine, yielding dephospho-CoA (dPCoA) and pyrophosphate. The protein is Phosphopantetheine adenylyltransferase of Desulfatibacillum aliphaticivorans.